A 189-amino-acid chain; its full sequence is NAD(P)H-quinone oxidoreductase subunit 6, chloroplastic (189 aa).

Helical transmembrane passes span 10-30 (LSLL…VLLP), 32-52 (ILYS…IYLL), 61-81 (AQVL…IMLV), 98-118 (GLSS…IFDT), and 144-164 (LLPF…AVFI).

It belongs to the complex I subunit 6 family. NDH is composed of at least 16 different subunits, 5 of which are encoded in the nucleus.

The protein resides in the plastid. The protein localises to the chloroplast thylakoid membrane. It catalyses the reaction a plastoquinone + NADH + (n+1) H(+)(in) = a plastoquinol + NAD(+) + n H(+)(out). The catalysed reaction is a plastoquinone + NADPH + (n+1) H(+)(in) = a plastoquinol + NADP(+) + n H(+)(out). Functionally, NDH shuttles electrons from NAD(P)H:plastoquinone, via FMN and iron-sulfur (Fe-S) centers, to quinones in the photosynthetic chain and possibly in a chloroplast respiratory chain. The immediate electron acceptor for the enzyme in this species is believed to be plastoquinone. Couples the redox reaction to proton translocation, and thus conserves the redox energy in a proton gradient. The protein is NAD(P)H-quinone oxidoreductase subunit 6, chloroplastic (ndhG) of Mesostigma viride (Green alga).